Here is a 287-residue protein sequence, read N- to C-terminus: Pyridoxal 5'-phosphate synthase subunit PdxS (287 aa).

Aspartate 21 provides a ligand contact to D-ribose 5-phosphate. The Schiff-base intermediate with D-ribose 5-phosphate role is filled by lysine 78. Glycine 150 provides a ligand contact to D-ribose 5-phosphate. Position 162 (arginine 162) interacts with D-glyceraldehyde 3-phosphate. D-ribose 5-phosphate contacts are provided by residues glycine 211 and 232 to 233 (GS).

Belongs to the PdxS/SNZ family. As to quaternary structure, in the presence of PdxT, forms a dodecamer of heterodimers.

It catalyses the reaction aldehydo-D-ribose 5-phosphate + D-glyceraldehyde 3-phosphate + L-glutamine = pyridoxal 5'-phosphate + L-glutamate + phosphate + 3 H2O + H(+). It functions in the pathway cofactor biosynthesis; pyridoxal 5'-phosphate biosynthesis. Functionally, catalyzes the formation of pyridoxal 5'-phosphate from ribose 5-phosphate (RBP), glyceraldehyde 3-phosphate (G3P) and ammonia. The ammonia is provided by the PdxT subunit. Can also use ribulose 5-phosphate and dihydroxyacetone phosphate as substrates, resulting from enzyme-catalyzed isomerization of RBP and G3P, respectively. The chain is Pyridoxal 5'-phosphate synthase subunit PdxS from Tropheryma whipplei (strain TW08/27) (Whipple's bacillus).